The sequence spans 388 residues: Galactokinase (388 aa).

33 to 36 (EHTD) lines the substrate pocket. Residues Ser-67 and 125-131 (GSGLSSS) contribute to the ATP site. Positions 131 and 163 each coordinate Mg(2+). Asp-175 (proton acceptor) is an active-site residue. Residue Tyr-225 coordinates substrate.

It belongs to the GHMP kinase family. GalK subfamily.

It localises to the cytoplasm. The enzyme catalyses alpha-D-galactose + ATP = alpha-D-galactose 1-phosphate + ADP + H(+). It functions in the pathway carbohydrate metabolism; galactose metabolism. Catalyzes the transfer of the gamma-phosphate of ATP to D-galactose to form alpha-D-galactose-1-phosphate (Gal-1-P). The polypeptide is Galactokinase (Lactobacillus helveticus (Lactobacillus suntoryeus)).